Here is a 453-residue protein sequence, read N- to C-terminus: Probable tRNA methyltransferase 9B (453 aa).

Position 214 is a phosphoserine (Ser214).

This sequence belongs to the methyltransferase superfamily.

Its function is as follows. May modify wobble uridines in specific arginine and glutamic acid tRNAs. Acts as a tumor suppressor by promoting the expression of LIN9. The polypeptide is Probable tRNA methyltransferase 9B (TRMT9B) (Bos taurus (Bovine)).